A 267-amino-acid polypeptide reads, in one-letter code: uncharacterized protein (267 aa).

The interval 58 to 90 is disordered; that stretch reads RHTDDKQEKNQNEGEDNQKGENKTTDQQDGPKK. 2 helical membrane passes run 101–121 and 226–246; these read IYVL…LSQM and GMTT…AWLG.

The protein resides in the membrane. This is an uncharacterized protein from Caenorhabditis elegans.